The following is a 160-amino-acid chain: Baculoviral IAP repeat-containing protein 5.1-A (160 aa).

The stretch at 27–97 is one BIR repeat; the sequence is RLATFADWPF…KRSANCGFLS (71 aa). Residue T43 is modified to Phosphothreonine; by CDK1. Zn(2+) is bound by residues C66, C69, H86, and C93.

The protein belongs to the IAP family. Component of the CPC at least composed of survivin/birc5, incenp, cdca8/borealin and/or cdca9/dasra-A, and aurkb/aurora-B. Interacts directly with incenp (via N-terminus), and may weakly interact with aurkb (via N-terminus) to stabilize the complex. Interacts with GTP-bound ran in both the S and M phases of the cell cycle. Also found in a complex with ubiquitin-mediated signaling proteins including at least usp9x/xFAM, nploc4/npl4 and ufd1. Post-translationally, ubiquitination is required for centrosome-targeting.

It localises to the cytoplasm. Its subcellular location is the nucleus. It is found in the chromosome. The protein localises to the centromere. The protein resides in the cytoskeleton. It localises to the spindle. In terms of biological role, component of the chromosomal passenger complex (CPC), a complex that acts as a key regulator of mitosis. The CPC complex has essential functions at the centromere in ensuring correct chromosome alignment and segregation and is required for chromatin-induced microtubule stabilization and spindle assembly. Stimulates the mitotic kinase activity of aurkb/aurora-B in the CPC. Does not appear to exhibit anti-apoptotic activity. This is Baculoviral IAP repeat-containing protein 5.1-A (birc5.1-a) from Xenopus laevis (African clawed frog).